Here is a 434-residue protein sequence, read N- to C-terminus: Probable exopolygalacturonase A (434 aa).

The first 19 residues, 1-19 (MKLPILVTLFITLPALCVS), serve as a signal peptide directing secretion. N-linked (GlcNAc...) asparagine glycans are attached at residues asparagine 46, asparagine 57, asparagine 106, asparagine 199, and asparagine 207. The PbH1 1 repeat unit spans residues 232–253 (SSNIVIQDSRIVNTDDCVSFKP). Residue aspartate 246 is the Proton donor of the active site. A disulfide bridge links cysteine 248 with cysteine 265. Asparagine 254 carries N-linked (GlcNAc...) asparagine glycosylation. Residues 255–275 (STQIVIQNLDCTGSHGISVGS) form a PbH1 2 repeat. The active site involves histidine 269. Residues asparagine 293, asparagine 329, and asparagine 354 are each glycosylated (N-linked (GlcNAc...) asparagine). A disulfide bond links cysteine 392 and cysteine 398. Asparagine 400 carries an N-linked (GlcNAc...) asparagine glycan.

The protein belongs to the glycosyl hydrolase 28 family.

It is found in the secreted. It catalyses the reaction [(1-&gt;4)-alpha-D-galacturonosyl](n) + H2O = alpha-D-galacturonate + [(1-&gt;4)-alpha-D-galacturonosyl](n-1). In terms of biological role, specific in hydrolyzing the terminal glycosidic bond of polygalacturonic acid and oligogalacturonates. The protein is Probable exopolygalacturonase A (pgxA) of Aspergillus niger (strain ATCC MYA-4892 / CBS 513.88 / FGSC A1513).